The chain runs to 267 residues: Dihydropteroate synthase (267 aa).

A Pterin-binding domain is found at 1–251 (MTKTKIMGIL…NVELNAKLAK (251 aa)). Asparagine 11 provides a ligand contact to Mg(2+). (7,8-dihydropterin-6-yl)methyl diphosphate is bound by residues threonine 51, aspartate 84, asparagine 103, aspartate 167, lysine 203, and 239–241 (RVH).

Belongs to the DHPS family. Homodimer. Mg(2+) is required as a cofactor.

The catalysed reaction is (7,8-dihydropterin-6-yl)methyl diphosphate + 4-aminobenzoate = 7,8-dihydropteroate + diphosphate. It participates in cofactor biosynthesis; tetrahydrofolate biosynthesis; 7,8-dihydrofolate from 2-amino-4-hydroxy-6-hydroxymethyl-7,8-dihydropteridine diphosphate and 4-aminobenzoate: step 1/2. Functionally, catalyzes the condensation of para-aminobenzoate (pABA) with 6-hydroxymethyl-7,8-dihydropterin diphosphate (DHPt-PP) to form 7,8-dihydropteroate (H2Pte), the immediate precursor of folate derivatives. This Staphylococcus aureus (strain MSSA476) protein is Dihydropteroate synthase (folP).